Reading from the N-terminus, the 229-residue chain is Acetylornithine aminotransferase (229 aa).

Pyridoxal 5'-phosphate-binding positions include 95–96 (GA) and Phe-122. Arg-125 serves as a coordination point for N(2)-acetyl-L-ornithine. 208 to 211 (DEIQ) is a pyridoxal 5'-phosphate binding site.

It belongs to the class-III pyridoxal-phosphate-dependent aminotransferase family. ArgD subfamily. In terms of assembly, homodimer. It depends on pyridoxal 5'-phosphate as a cofactor.

The protein resides in the cytoplasm. The enzyme catalyses N(2)-acetyl-L-ornithine + 2-oxoglutarate = N-acetyl-L-glutamate 5-semialdehyde + L-glutamate. Its pathway is amino-acid biosynthesis; L-arginine biosynthesis; N(2)-acetyl-L-ornithine from L-glutamate: step 4/4. This Bacillus amyloliquefaciens (Bacillus velezensis) protein is Acetylornithine aminotransferase (argD).